Here is a 280-residue protein sequence, read N- to C-terminus: MRGVSCLQVLLLLVLGAAGTQGRKSAACGQPRMSSRIVGGRDGRDGEWPWQASIQHRGAHVCGGSLIAPQWVLTAAHCFPRRALPAEYRVRLGALRLGSTSPRTLSVPVRRVLLPPDYSEDGARGDLALLQLRRPVPLSARVQPVCLPVPGARPPPGTPCRVTGWGSLRPGVPLPEWRPLQGVRVPLLDSRTCDGLYHVGADVPQAERIVLPGSLCAGYPQGHKDACQGDSGGPLTCLQSGSWVLVGVVSWGKGCALPNRPGVYTSVATYSPWIQARVSF.

The signal sequence occupies residues 1–22; that stretch reads MRGVSCLQVLLLLVLGAAGTQG. Residues 37 to 279 form the Peptidase S1 domain; the sequence is IVGGRDGRDG…YSPWIQARVS (243 aa). Residues Cys-62 and Cys-78 are joined by a disulfide bond. Residues His-77 and Asp-126 each act as charge relay system in the active site. 3 cysteine pairs are disulfide-bonded: Cys-160-Cys-237, Cys-193-Cys-216, and Cys-227-Cys-255. Ser-231 (charge relay system) is an active-site residue.

Belongs to the peptidase S1 family. Predominantly expressed in macrophages. Present in the spleen, small and large intestine, lung and brain (at protein level). Highly expressed in peripheral leukocytes, ovary, retina, spleen and stomach. Moderately expressed in thymus, uterus and platelets, as well as some brain tissues, such as thalamus and fetal brain.

It localises to the secreted. Functionally, serine protease that has amidolytic activity, cleaving its substrates before Arg residues. In Homo sapiens (Human), this protein is Serine protease 33 (PRSS33).